The primary structure comprises 360 residues: Squamosa promoter-binding-like protein 7 (360 aa).

The segment covering 74-89 (AQGSGGGGGGGGGGSA) has biased composition (gly residues). Residues 74-98 (AQGSGGGGGGGGGGSADQGKRKEKA) are disordered. The SBP-type zinc finger occupies 105 to 182 (VPRCQVEGCD…AGHNERRRRS (78 aa)). Zn(2+)-binding residues include Cys-108, Cys-113, Cys-130, His-133, Cys-149, Cys-152, His-156, and Cys-168. The Bipartite nuclear localization signal signature appears at 165-181 (KKSCRRRLAGHNERRRR). The segment covering 172–182 (LAGHNERRRRS) has biased composition (basic residues). Disordered stretches follow at residues 172 to 196 (LAGH…AHPH), 261 to 306 (FFSD…HENQ), and 318 to 360 (TTAA…ARVV).

In terms of tissue distribution, expressed in young panicles.

The protein localises to the nucleus. Trans-acting factor that binds specifically to the consensus nucleotide sequence 5'-TNCGTACAA-3'. May be involved in panicle development. The chain is Squamosa promoter-binding-like protein 7 (SPL7) from Oryza sativa subsp. japonica (Rice).